The chain runs to 430 residues: Glutamate-1-semialdehyde 2,1-aminomutase (430 aa).

Lysine 265 is subject to N6-(pyridoxal phosphate)lysine.

It belongs to the class-III pyridoxal-phosphate-dependent aminotransferase family. HemL subfamily. Pyridoxal 5'-phosphate serves as cofactor.

The protein resides in the cytoplasm. It carries out the reaction (S)-4-amino-5-oxopentanoate = 5-aminolevulinate. It functions in the pathway porphyrin-containing compound metabolism; protoporphyrin-IX biosynthesis; 5-aminolevulinate from L-glutamyl-tRNA(Glu): step 2/2. The polypeptide is Glutamate-1-semialdehyde 2,1-aminomutase (Caldivirga maquilingensis (strain ATCC 700844 / DSM 13496 / JCM 10307 / IC-167)).